The sequence spans 229 residues: Transmembrane protein 217 (229 aa).

A helical membrane pass occupies residues 13–33 (MGTVLSGVFTIMAVDMYLIFE). The N-linked (GlcNAc...) asparagine glycan is linked to Asn-39. A run of 3 helical transmembrane segments spans residues 67 to 87 (IVLFLSFITILISCFLLYSVY), 94 to 114 (LVIYIVWIFFYETANVVIQIL), and 129 to 149 (WFGLVSRTVMHCFWMFFVINY). Residue Asn-156 is glycosylated (N-linked (GlcNAc...) asparagine).

The protein resides in the membrane. The polypeptide is Transmembrane protein 217 (TMEM217) (Homo sapiens (Human)).